A 519-amino-acid chain; its full sequence is 2-isopropylmalate synthase (519 aa).

The Pyruvate carboxyltransferase domain maps to I12 to V274. Mn(2+)-binding residues include D21, H209, H211, and N245. Residues R396–A519 form a regulatory domain region.

Belongs to the alpha-IPM synthase/homocitrate synthase family. LeuA type 1 subfamily. Homodimer. Mn(2+) is required as a cofactor.

It localises to the cytoplasm. It catalyses the reaction 3-methyl-2-oxobutanoate + acetyl-CoA + H2O = (2S)-2-isopropylmalate + CoA + H(+). It participates in amino-acid biosynthesis; L-leucine biosynthesis; L-leucine from 3-methyl-2-oxobutanoate: step 1/4. In terms of biological role, catalyzes the condensation of the acetyl group of acetyl-CoA with 3-methyl-2-oxobutanoate (2-ketoisovalerate) to form 3-carboxy-3-hydroxy-4-methylpentanoate (2-isopropylmalate). The protein is 2-isopropylmalate synthase of Xylella fastidiosa (strain M23).